The following is a 450-amino-acid chain: Phosphoglucosamine mutase (450 aa).

The Phosphoserine intermediate role is filled by Ser102. Mg(2+)-binding residues include Ser102, Asp243, Asp245, and Asp247. Phosphoserine is present on Ser102.

It belongs to the phosphohexose mutase family. The cofactor is Mg(2+). Post-translationally, activated by phosphorylation.

It carries out the reaction alpha-D-glucosamine 1-phosphate = D-glucosamine 6-phosphate. Its function is as follows. Catalyzes the conversion of glucosamine-6-phosphate to glucosamine-1-phosphate. The protein is Phosphoglucosamine mutase of Mesorhizobium japonicum (strain LMG 29417 / CECT 9101 / MAFF 303099) (Mesorhizobium loti (strain MAFF 303099)).